Reading from the N-terminus, the 361-residue chain is S-adenosylmethionine:tRNA ribosyltransferase-isomerase (361 aa).

It belongs to the QueA family. As to quaternary structure, monomer.

The protein localises to the cytoplasm. The catalysed reaction is 7-aminomethyl-7-carbaguanosine(34) in tRNA + S-adenosyl-L-methionine = epoxyqueuosine(34) in tRNA + adenine + L-methionine + 2 H(+). It participates in tRNA modification; tRNA-queuosine biosynthesis. Functionally, transfers and isomerizes the ribose moiety from AdoMet to the 7-aminomethyl group of 7-deazaguanine (preQ1-tRNA) to give epoxyqueuosine (oQ-tRNA). The sequence is that of S-adenosylmethionine:tRNA ribosyltransferase-isomerase from Actinobacillus pleuropneumoniae serotype 3 (strain JL03).